The sequence spans 382 residues: Chaperone protein DnaJ (382 aa).

One can recognise a J domain in the interval 4–69; that stretch reads DYYEVLGVSR…DKRRRYDQFG (66 aa). A CR-type zinc finger spans residues 138–219; sequence GVEKTIKIKK…CYGEGIKQGE (82 aa). C151, C154, C167, C170, C193, C196, C207, and C210 together coordinate Zn(2+). CXXCXGXG motif repeat units lie at residues 151–158, 167–174, 193–200, and 207–214; these read CKECNGSG, CPTCHGAG, CPTCGGEG, and CPSCYGEG.

The protein belongs to the DnaJ family. Homodimer. Requires Zn(2+) as cofactor.

It is found in the cytoplasm. Functionally, participates actively in the response to hyperosmotic and heat shock by preventing the aggregation of stress-denatured proteins and by disaggregating proteins, also in an autonomous, DnaK-independent fashion. Unfolded proteins bind initially to DnaJ; upon interaction with the DnaJ-bound protein, DnaK hydrolyzes its bound ATP, resulting in the formation of a stable complex. GrpE releases ADP from DnaK; ATP binding to DnaK triggers the release of the substrate protein, thus completing the reaction cycle. Several rounds of ATP-dependent interactions between DnaJ, DnaK and GrpE are required for fully efficient folding. Also involved, together with DnaK and GrpE, in the DNA replication of plasmids through activation of initiation proteins. The sequence is that of Chaperone protein DnaJ from Chlorobium luteolum (strain DSM 273 / BCRC 81028 / 2530) (Pelodictyon luteolum).